The following is a 451-amino-acid chain: Charged multivesicular body protein 7 (451 aa).

The segment at 1-22 (MWSPEREAQAPTGGDPAGLLPP) is disordered. Phosphoserine is present on Ser232. Residues 248 to 312 (EQLLSRKVES…DTVQGILDRI (65 aa)) adopt a coiled-coil conformation. Position 409 is a phosphothreonine (Thr409). A phosphoserine mark is found at Ser411, Ser432, and Ser442. The segment at 431–451 (LSEGGLIPSSKSPKRQLEPTL) is disordered.

The protein belongs to the SNF7 family. As to quaternary structure, interacts with CHMP4B, but not with VPS25. Interacts with LEMD2 (via C-terminus).

The protein localises to the cytoplasm. It localises to the nucleus envelope. Functionally, ESCRT-III-like protein required to recruit the ESCRT-III complex to the nuclear envelope (NE) during late anaphase. Together with SPAST, the ESCRT-III complex promotes NE sealing and mitotic spindle disassembly during late anaphase. Recruited to the reforming NE during anaphase by LEMD2. Plays a role in the endosomal sorting pathway. This Mus musculus (Mouse) protein is Charged multivesicular body protein 7 (Chmp7).